The chain runs to 474 residues: CUGBP Elav-like family member 4 (474 aa).

Residues 1–287 (MYIKMATLAN…AAFAAAQMQQ (287 aa)) form a sufficient for RNA-binding and MSE-dependent splicing activity region. The span at 18 to 28 (LSTNGLGSSPG) shows a compositional bias: polar residues. Residues 18 to 41 (LSTNGLGSSPGSAGHMNGLSHSPG) form a disordered region. RRM domains follow at residues 54–135 (IKLF…PADS) and 141–221 (RKLF…FADT). The interval 228–247 (RRMQQMAGQMGMFNPMAIPF) is necessary for TNNT2 exon 5 inclusion. The RRM 3 domain maps to 392–467 (PQPPPMIPQQ…KRLKVQLKRP (76 aa)).

This sequence belongs to the CELF/BRUNOL family.

The protein localises to the nucleus. It localises to the cytoplasm. Functionally, RNA-binding protein implicated in the regulation of pre-mRNA alternative splicing. Mediates exon inclusion and/or exclusion in pre-mRNA that are subject to tissue-specific and developmentally regulated alternative splicing. Specifically activates exon 5 inclusion of cardiac isoforms of TNNT2 during heart remodeling at the juvenile to adult transition. Promotes exclusion of both the smooth muscle (SM) and non-muscle (NM) exons in actinin pre-mRNAs. Activates the splicing of MAPT/Tau exon 10. Binds to muscle-specific splicing enhancer (MSE) intronic sites flanking the alternative exon 5 of TNNT2 pre-mRNA. In Macaca fascicularis (Crab-eating macaque), this protein is CUGBP Elav-like family member 4 (CELF4).